Here is an 851-residue protein sequence, read N- to C-terminus: Glutathione transporter 1 (851 aa).

The segment covering 1–14 (MTARNSASIPTSIR) has biased composition (polar residues). Residues 1-116 (MTARNSASIP…LDNETDSEVE (116 aa)) are disordered. N-linked (GlcNAc...) asparagine glycosylation is present at Asn32. A compositionally biased stretch (low complexity) spans 33–68 (LSTKTASKTSLTFRQSSSDESTSSYSGNHHNINIQH). Residues 74-92 (FRTNSSSFSPNDYSISESP) are compositionally biased toward polar residues. N-linked (GlcNAc...) asparagine glycosylation occurs at Asn77. Ser93 is modified (phosphoserine). Residues 105–134 (VQLDNETDSEVESEVEELERELEAIEDSVY) adopt a coiled-coil conformation. Asn109 is a glycosylation site (N-linked (GlcNAc...) asparagine). The next 2 helical transmembrane spans lie at 156 to 176 (TWVL…FFSL) and 179 to 199 (PALS…GKLL). Asn256 carries an N-linked (GlcNAc...) asparagine glycan. 4 consecutive transmembrane segments (helical) span residues 259 to 279 (WGYK…FAGL), 282 to 302 (RWIV…TVLF), 333 to 353 (FFAY…FIFK), and 405 to 425 (WVIC…VPIL). N-linked (GlcNAc...) asparagine glycans are attached at residues Asn452 and Asn464. 5 consecutive transmembrane segments (helical) span residues 480–500 (YSMS…HCAL), 531–551 (APQW…IFTV), 560–580 (VWAL…QGVL), 592–612 (IITE…NLMI), and 642–662 (ILFF…VAVQ). Residue Asn691 is glycosylated (N-linked (GlcNAc...) asparagine). The next 3 helical transmembrane spans lie at 711–731 (YYPL…TWGL), 757–777 (PATG…NYVI), and 791–811 (VLAA…FLCV). Asn843 is a glycosylation site (N-linked (GlcNAc...) asparagine).

It belongs to the oligopeptide OPT transporter family.

It localises to the endoplasmic reticulum membrane. It is found in the cell membrane. Its function is as follows. High-affinity glutathione transporter which plays a role in scavenging glutathione from the extracellular environment for the maintenance of sulfur homeostasis. The sequence is that of Glutathione transporter 1 (pgt1) from Schizosaccharomyces pombe (strain 972 / ATCC 24843) (Fission yeast).